A 156-amino-acid chain; its full sequence is S-ribosylhomocysteine lyase (156 aa).

Residues His-56, His-60, and Cys-123 each coordinate Fe cation.

The protein belongs to the LuxS family. As to quaternary structure, homodimer. It depends on Fe cation as a cofactor.

The catalysed reaction is S-(5-deoxy-D-ribos-5-yl)-L-homocysteine = (S)-4,5-dihydroxypentane-2,3-dione + L-homocysteine. In terms of biological role, involved in the synthesis of autoinducer 2 (AI-2) which is secreted by bacteria and is used to communicate both the cell density and the metabolic potential of the environment. The regulation of gene expression in response to changes in cell density is called quorum sensing. Catalyzes the transformation of S-ribosylhomocysteine (RHC) to homocysteine (HC) and 4,5-dihydroxy-2,3-pentadione (DPD). The chain is S-ribosylhomocysteine lyase from Staphylococcus aureus (strain bovine RF122 / ET3-1).